Here is a 94-residue protein sequence, read N- to C-terminus: Integration host factor subunit beta (94 aa).

The protein belongs to the bacterial histone-like protein family. In terms of assembly, heterodimer of an alpha and a beta chain.

In terms of biological role, this protein is one of the two subunits of integration host factor, a specific DNA-binding protein that functions in genetic recombination as well as in transcriptional and translational control. This Haemophilus influenzae (strain 86-028NP) protein is Integration host factor subunit beta.